Here is a 112-residue protein sequence, read N- to C-terminus: Pediocin PA-1 immunity protein (112 aa).

In terms of biological role, imparts immunity to pediocin PA-1/ACH to naturally sensitive host strains. This Pediococcus acidilactici protein is Pediocin PA-1 immunity protein (pedB).